The sequence spans 963 residues: Protein translocase subunit SecA (963 aa).

ATP is bound by residues glutamine 87, 105 to 109 (GEGKT), and aspartate 512. Disordered stretches follow at residues 868–909 (GPVM…EDFT) and 924–963 (QFVGGDGSSTPQQVVAGQKVGRNDPCPCGSGKKYKKCHGS). Positions 874–886 (PDEEEDGDEDSVE) are enriched in acidic residues. Cysteine 949, cysteine 951, cysteine 960, and histidine 961 together coordinate Zn(2+).

It belongs to the SecA family. Monomer and homodimer. Part of the essential Sec protein translocation apparatus which comprises SecA, SecYEG and auxiliary proteins SecDF. Other proteins may also be involved. Requires Zn(2+) as cofactor.

It localises to the cell inner membrane. The protein resides in the cytoplasm. The catalysed reaction is ATP + H2O + cellular proteinSide 1 = ADP + phosphate + cellular proteinSide 2.. In terms of biological role, part of the Sec protein translocase complex. Interacts with the SecYEG preprotein conducting channel. Has a central role in coupling the hydrolysis of ATP to the transfer of proteins into and across the cell membrane, serving as an ATP-driven molecular motor driving the stepwise translocation of polypeptide chains across the membrane. This is Protein translocase subunit SecA from Solibacter usitatus (strain Ellin6076).